A 446-amino-acid polypeptide reads, in one-letter code: Adenylosuccinate synthetase (446 aa).

GTP is bound by residues 20-26 and 48-50; these read GDEGKGK and GHT. Aspartate 21 functions as the Proton acceptor in the catalytic mechanism. Aspartate 21 and glycine 48 together coordinate Mg(2+). Residues 21-24, 46-49, threonine 137, arginine 151, glutamine 232, threonine 247, and arginine 319 each bind IMP; these read DEGK and NAGH. Residue histidine 49 is the Proton donor of the active site. Residue 315–321 participates in substrate binding; the sequence is SVTGRPR. Residues arginine 321, 347-349, and 429-431 contribute to the GTP site; these read KLD and STG.

Belongs to the adenylosuccinate synthetase family. In terms of assembly, homodimer. Requires Mg(2+) as cofactor.

It localises to the cytoplasm. The catalysed reaction is IMP + L-aspartate + GTP = N(6)-(1,2-dicarboxyethyl)-AMP + GDP + phosphate + 2 H(+). It functions in the pathway purine metabolism; AMP biosynthesis via de novo pathway; AMP from IMP: step 1/2. In terms of biological role, plays an important role in the de novo pathway of purine nucleotide biosynthesis. Catalyzes the first committed step in the biosynthesis of AMP from IMP. This Polynucleobacter asymbioticus (strain DSM 18221 / CIP 109841 / QLW-P1DMWA-1) (Polynucleobacter necessarius subsp. asymbioticus) protein is Adenylosuccinate synthetase.